The chain runs to 464 residues: Phospho-cellobiase (464 aa).

Catalysis depends on Glu-172, which acts as the Proton donor. Catalysis depends on Glu-361, which acts as the Nucleophile.

Belongs to the glycosyl hydrolase 1 family.

The sequence is that of Phospho-cellobiase (casB) from Klebsiella oxytoca.